A 380-amino-acid polypeptide reads, in one-letter code: Probable tRNA sulfurtransferase (380 aa).

The 105-residue stretch at 58–162 (EEVIERLKKV…MAFVYAGVIE (105 aa)) folds into the THUMP domain. ATP-binding positions include 178–179 (LL), 203–204 (YF), Arg-260, Gly-282, and Gln-291.

The protein belongs to the ThiI family.

The protein localises to the cytoplasm. It catalyses the reaction [ThiI sulfur-carrier protein]-S-sulfanyl-L-cysteine + a uridine in tRNA + 2 reduced [2Fe-2S]-[ferredoxin] + ATP + H(+) = [ThiI sulfur-carrier protein]-L-cysteine + a 4-thiouridine in tRNA + 2 oxidized [2Fe-2S]-[ferredoxin] + AMP + diphosphate. It carries out the reaction [ThiS sulfur-carrier protein]-C-terminal Gly-Gly-AMP + S-sulfanyl-L-cysteinyl-[cysteine desulfurase] + AH2 = [ThiS sulfur-carrier protein]-C-terminal-Gly-aminoethanethioate + L-cysteinyl-[cysteine desulfurase] + A + AMP + 2 H(+). It functions in the pathway cofactor biosynthesis; thiamine diphosphate biosynthesis. In terms of biological role, catalyzes the ATP-dependent transfer of a sulfur to tRNA to produce 4-thiouridine in position 8 of tRNAs, which functions as a near-UV photosensor. Also catalyzes the transfer of sulfur to the sulfur carrier protein ThiS, forming ThiS-thiocarboxylate. This is a step in the synthesis of thiazole, in the thiamine biosynthesis pathway. The sulfur is donated as persulfide by IscS. This is Probable tRNA sulfurtransferase from Thermoanaerobacter sp. (strain X514).